Consider the following 358-residue polypeptide: MSAALEKPQIIAHIQKSLNYTVFESKWIPCSAKFVCMGNFARGTGVMQIYEIQHGELQLVREIEKSKPIKCGTFGATSLQQRHLATGDFDGNLNVWNLEVPDSPVYSVKAHKEIINAIDGVGGLGIGDGAPEIVTGSRDGTVKVWDSRQKDTPVVNMEPTEGETKRDCWTVAFGHAFNDQDRCVCAGYDNGDIKLFDLRNMSLRWEKNIRNGVCSVEFDRKDINMNKLVATSLEGKFHVFDMRTQHPSKGFASVSEKAHKSTIWQVRHLPQNRDVFMTAGGAGNLHLWKYEYPAQRSKKGADDVEMGVAGSVNLLQNVTLSTQPISSLDWSPDKQGLCVCSSFDQSVRVLIVTKLNTV.

WD repeat units lie at residues 64-106 (EKSK…SPVY), 116-155 (NAID…TPVV), 163-206 (ETKR…LRWE), 208-250 (NIRN…PSKG), 258-298 (AHKS…QRSK), and 320-358 (LSTQ…LNTV).

In terms of assembly, interacts with PIH1D1; the interaction associates DNAAF10 with the R2TP complex. Interacts with several dynein axonemal assembly factors.

It is found in the dynein axonemal particle. Functionally, key assembly factor specifically required for the stability of axonemal dynein heavy chains in cytoplasm. The chain is Dynein axonemal assembly factor 10 (dnaaf10) from Danio rerio (Zebrafish).